A 264-amino-acid polypeptide reads, in one-letter code: Phosphatidylinositol transfer protein 1 (264 aa).

The interval 151 to 174 (NYKETEDPTKIRSEKANRGPLEEE) is disordered. Positions 238-264 (VRAFELKTKEDLKKKLEEKDENKAAEK) form a coiled coil.

This sequence belongs to the PtdIns transfer protein family. PI transfer class I subfamily. Post-translationally, phosphorylated in response to activation of rasG.

It localises to the cytoplasm. It is found in the golgi apparatus. Functionally, catalyzes the transfer of PtdIns and phosphatidylcholine between membranes. The polypeptide is Phosphatidylinositol transfer protein 1 (pitA) (Dictyostelium discoideum (Social amoeba)).